Here is a 516-residue protein sequence, read N- to C-terminus: RNA-binding region-containing protein 3 (516 aa).

4 disordered regions span residues 1–27 (MAAPEQPLPMSRGCQNSSSLSPPRGDR), 106–130 (VHSPCPSLGTEKKKRSDDPVEDDKE), 210–254 (EDYM…DEDR), and 264–283 (ANLQPKRPKPIKQRHVRKKR). Position 21 is a phosphoserine (Ser21). The RRM 1 domain occupies 27–102 (RTLLVRHLPA…HTLVVEFAKE (76 aa)). Position 108 is a phosphoserine (Ser108). Over residues 115-130 (TEKKKRSDDPVEDDKE) the composition is skewed to basic and acidic residues. The segment covering 217 to 230 (APLPPTSPQPPEEP) has biased composition (pro residues). The span at 269–283 (KRPKPIKQRHVRKKR) shows a compositional bias: basic residues. One can recognise an RRM 2 domain in the interval 419-502 (CRIYVKNLAK…KPMVVQFARS (84 aa)).

As to quaternary structure, component of the U11/U12 snRNPs that are part of the U12-type spliceosome. Found in a complex with m(7)G-capped U12 snRNA. Interacts with PDCD7.

Its subcellular location is the nucleus. Functionally, participates in pre-mRNA U12-dependent splicing, performed by the minor spliceosome which removes U12-type introns. U12-type introns comprises less than 1% of all non-coding sequences. Binds to the 3'-stem-loop of m(7)G-capped U12 snRNA. This is RNA-binding region-containing protein 3 (RNPC3) from Bos taurus (Bovine).